The chain runs to 377 residues: MKFEKLGQSGRARRGRLTLEHGVVETPVFMPVGTYGTVKGMLPRDIEDIQAQIILGNTFHLYLRPGLEVIKQHGGLHDFIKWNKPILTDSGGFQVFSLGAMRKIKEEGVTFRSPIDGSKVFLSPEISMEIQHVLNSDIVMIFDECTPYPATHEEAQKSLQLSLRWAKRCKAHHHDELKNKNALFGIIQGGMYEDLRDESLNGLLEIGFDGYAIGGLSVGEPKEEMIKVLDYLPNKMPHDKPRYLMGVGKPEDIVEAVRRGVDMFDCVMPTRNARNGHYFVTDGLVRIRNSKYRHDQGPLDPHCDCYTCKNFTRAYLFHLEKCGEMLASMLGTIHNLRYYQRLTEGMRDALDNGTFDEFVQDFYARRGLEVPPCPVDE.

The Proton acceptor role is filled by aspartate 89. Residues 89 to 93 (DSGGF), aspartate 143, glutamine 188, and glycine 215 contribute to the substrate site. An RNA binding region spans residues 246 to 252 (GVGKPED). The active-site Nucleophile is aspartate 265. The segment at 270 to 274 (TRNAR) is RNA binding; important for wobble base 34 recognition. Zn(2+) is bound by residues cysteine 303, cysteine 305, cysteine 308, and histidine 334.

Belongs to the queuine tRNA-ribosyltransferase family. As to quaternary structure, homodimer. Within each dimer, one monomer is responsible for RNA recognition and catalysis, while the other monomer binds to the replacement base PreQ1. The cofactor is Zn(2+).

It carries out the reaction 7-aminomethyl-7-carbaguanine + guanosine(34) in tRNA = 7-aminomethyl-7-carbaguanosine(34) in tRNA + guanine. It functions in the pathway tRNA modification; tRNA-queuosine biosynthesis. Catalyzes the base-exchange of a guanine (G) residue with the queuine precursor 7-aminomethyl-7-deazaguanine (PreQ1) at position 34 (anticodon wobble position) in tRNAs with GU(N) anticodons (tRNA-Asp, -Asn, -His and -Tyr). Catalysis occurs through a double-displacement mechanism. The nucleophile active site attacks the C1' of nucleotide 34 to detach the guanine base from the RNA, forming a covalent enzyme-RNA intermediate. The proton acceptor active site deprotonates the incoming PreQ1, allowing a nucleophilic attack on the C1' of the ribose to form the product. After dissociation, two additional enzymatic reactions on the tRNA convert PreQ1 to queuine (Q), resulting in the hypermodified nucleoside queuosine (7-(((4,5-cis-dihydroxy-2-cyclopenten-1-yl)amino)methyl)-7-deazaguanosine). This is Queuine tRNA-ribosyltransferase from Acinetobacter baumannii (strain AB307-0294).